Reading from the N-terminus, the 212-residue chain is Large ribosomal subunit protein uL3 (212 aa).

The disordered stretch occupies residues 117 to 142 (TSKGKGFQGNIKRHNQSRGPMTHGSR).

This sequence belongs to the universal ribosomal protein uL3 family. In terms of assembly, part of the 50S ribosomal subunit. Forms a cluster with proteins L14 and L19.

One of the primary rRNA binding proteins, it binds directly near the 3'-end of the 23S rRNA, where it nucleates assembly of the 50S subunit. The protein is Large ribosomal subunit protein uL3 of Acholeplasma laidlawii (strain PG-8A).